The sequence spans 137 residues: Seminal plasma sperm motility inhibitor (137 aa).

Positions 1–21 (MKLGSAIPWALLLSTXTLVST) are cleaved as a signal peptide. Cysteines 30 and 51 form a disulfide. The 102-residue stretch at 30 to 131 (CGGFLKNYSG…SSFNVYFYGI (102 aa)) folds into the CUB domain. Asn36 is a glycosylation site (N-linked (GlcNAc...) asparagine).

The protein belongs to the spermadhesin family. In terms of tissue distribution, seminal plasma or sperm.

The protein localises to the secreted. In terms of biological role, inhibitor of sperm motility. This is Seminal plasma sperm motility inhibitor (SPMI) from Sus scrofa (Pig).